A 470-amino-acid chain; its full sequence is Amino-acid permease RocC (470 aa).

Helical transmembrane passes span 18 to 38 (FMIA…GFTI), 44 to 64 (LGAI…MLCL), 90 to 110 (GFMI…LELT), 119 to 139 (WLPS…IFLI), 159 to 179 (VAAI…LIDF), 196 to 216 (GLFP…NFSF), 243 to 263 (VIWR…AILP), 281 to 301 (IGIP…ILSV), 338 to 358 (ALLI…MAAE), 360 to 380 (VYLW…MSIC), 409 to 429 (LVPI…IFIP), and 433 to 453 (IGLY…HLSI).

The protein belongs to the amino acid-polyamine-organocation (APC) superfamily.

The protein localises to the cell membrane. In terms of biological role, putative transport protein involved in arginine degradative pathway. Probably transports arginine or ornithine. The protein is Amino-acid permease RocC (rocC) of Bacillus subtilis (strain 168).